The following is a 317-amino-acid chain: Aspartate carbamoyltransferase catalytic subunit (317 aa).

Carbamoyl phosphate contacts are provided by arginine 66 and threonine 67. An L-aspartate-binding site is contributed by lysine 94. Residues arginine 116, histidine 144, and glutamine 147 each coordinate carbamoyl phosphate. L-aspartate contacts are provided by arginine 177 and arginine 231. The carbamoyl phosphate site is built by glycine 272 and proline 273.

This sequence belongs to the aspartate/ornithine carbamoyltransferase superfamily. ATCase family. As to quaternary structure, heterododecamer (2C3:3R2) of six catalytic PyrB chains organized as two trimers (C3), and six regulatory PyrI chains organized as three dimers (R2).

The catalysed reaction is carbamoyl phosphate + L-aspartate = N-carbamoyl-L-aspartate + phosphate + H(+). It participates in pyrimidine metabolism; UMP biosynthesis via de novo pathway; (S)-dihydroorotate from bicarbonate: step 2/3. Its function is as follows. Catalyzes the condensation of carbamoyl phosphate and aspartate to form carbamoyl aspartate and inorganic phosphate, the committed step in the de novo pyrimidine nucleotide biosynthesis pathway. This Rhodopseudomonas palustris (strain ATCC BAA-98 / CGA009) protein is Aspartate carbamoyltransferase catalytic subunit.